Here is an 84-residue protein sequence, read N- to C-terminus: Small ribosomal subunit protein uS17 (84 aa).

The protein belongs to the universal ribosomal protein uS17 family. In terms of assembly, part of the 30S ribosomal subunit.

One of the primary rRNA binding proteins, it binds specifically to the 5'-end of 16S ribosomal RNA. In Clostridium botulinum (strain Eklund 17B / Type B), this protein is Small ribosomal subunit protein uS17.